The following is a 278-amino-acid chain: Elongation factor Ts (278 aa).

The involved in Mg(2+) ion dislocation from EF-Tu stretch occupies residues 82 to 85 (TDFV).

It belongs to the EF-Ts family.

Its subcellular location is the cytoplasm. Functionally, associates with the EF-Tu.GDP complex and induces the exchange of GDP to GTP. It remains bound to the aminoacyl-tRNA.EF-Tu.GTP complex up to the GTP hydrolysis stage on the ribosome. In Streptomyces avermitilis (strain ATCC 31267 / DSM 46492 / JCM 5070 / NBRC 14893 / NCIMB 12804 / NRRL 8165 / MA-4680), this protein is Elongation factor Ts.